Here is a 420-residue protein sequence, read N- to C-terminus: Acetyl-CoA acetyltransferase B, mitochondrial (420 aa).

A mitochondrion-targeting transit peptide spans 1 to 33 (MAFCGPRTAARLSHSTRALHYTHRSFASPRTLN). Cysteine 119 acts as the Acyl-thioester intermediate in catalysis. Residues tyrosine 212, 251–253 (RVD), and lysine 256 contribute to the CoA site. Tyrosine 212 is a K(+) binding site. Positions 273 and 274 each coordinate K(+). Residue serine 277 participates in CoA binding. Position 374 (valine 374) interacts with K(+). Cysteine 406 acts as the Proton donor/acceptor in catalysis.

Belongs to the thiolase-like superfamily. Thiolase family. In terms of assembly, homotetramer.

The protein resides in the mitochondrion. The enzyme catalyses 2 acetyl-CoA = acetoacetyl-CoA + CoA. It carries out the reaction propanoyl-CoA + acetyl-CoA = 2-methyl-3-oxobutanoyl-CoA + CoA. It functions in the pathway lipid metabolism; fatty acid beta-oxidation. Functionally, this is one of the enzymes that catalyzes the last step of the mitochondrial beta-oxidation pathway, an aerobic process breaking down fatty acids into acetyl-CoA. Using free coenzyme A/CoA, catalyzes the thiolytic cleavage of medium- to long-chain 3-oxoacyl-CoAs into acetyl-CoA and a fatty acyl-CoA shortened by two carbon atoms. The activity of the enzyme is reversible and it can also catalyze the condensation of two acetyl-CoA molecules into acetoacetyl-CoA. Thereby, it plays a major role in ketone body metabolism. The protein is Acetyl-CoA acetyltransferase B, mitochondrial (acat1-b) of Xenopus laevis (African clawed frog).